A 78-amino-acid chain; its full sequence is MVKTITVSDDVYNELLRIKGKKSFSELLRELLREKKGNSVALKHIYGILNGEEYRETRKRLKELEKEFEKWKQFLTQV.

It belongs to the UPF0330 family.

Possibly the antitoxin component of a type II toxin-antitoxin (TA) system. Its cognate toxin is VapC4 (Potential). This chain is Putative antitoxin VapB4 (vapB4), found in Pyrococcus furiosus (strain ATCC 43587 / DSM 3638 / JCM 8422 / Vc1).